The sequence spans 608 residues: Prolactin receptor (608 aa).

The signal sequence occupies residues 1 to 19 (MSSALAYMLLVLSISLLNG). Residues 20–229 (QSPPGKPEIH…EIPNDFTLKD (210 aa)) are Extracellular-facing. 2 consecutive Fibronectin type-III domains span residues 22 to 122 (PPGK…IVEP) and 124 to 224 (PPRN…IPND). Cys-31 and Cys-41 are disulfide-bonded. Asn-54 carries N-linked (GlcNAc...) asparagine glycosylation. An intrachain disulfide couples Cys-70 to Cys-81. N-linked (GlcNAc...) asparagine glycans are attached at residues Asn-99 and Asn-127. 2 residues coordinate Zn(2+): Asp-206 and His-207. Positions 210–214 (WSRWG) match the WSXWS motif motif. Residues 230–253 (TTVWIIVAVLSAVICLIMVWAVAL) traverse the membrane as a helical segment. Over 254–608 (KGYSMMTCIF…DPTCFMHSFH (355 aa)) the chain is Cytoplasmic. The Box 1 motif signature appears at 262–270 (IFPPVPGPK). Disordered regions lie at residues 317–355 (DERLMPSHSKEYPGQGVKPTHLDPDSDSGHGSYDSHSLL), 377–419 (KPEN…TRRS), and 466–487 (GAKSFPSDKQNTSWPPLQEKGP). Residues 318 to 327 (ERLMPSHSKE) show a composition bias toward basic and acidic residues. Residues 345–354 (GHGSYDSHSL) show a composition bias toward low complexity. Polar residues predominate over residues 398–408 (CHTDTSKSTTW).

Belongs to the type I cytokine receptor family. Type 1 subfamily. As to quaternary structure, interacts with SMARCA1. Interacts with NEK3 and VAV2 and this interaction is prolactin-dependent.

The protein resides in the membrane. In terms of biological role, this is a receptor for the anterior pituitary hormone prolactin. This is Prolactin receptor (Prlr) from Mus musculus (Mouse).